Consider the following 384-residue polypeptide: Secreted LysM effector Blys7 (384 aa).

An N-terminal signal peptide occupies residues 1–18 (MQRHLLLGLAGLPALLSA). A LysM 1 domain is found at 27-71 (FATVAANGETCDSMAATWGLDTATFQSLNPKAKCPEVIGGEQYCV). The span at 81–106 (EPTTAPATTSTQTTTTTTTEVTSTTV) shows a compositional bias: low complexity. The disordered stretch occupies residues 81-112 (EPTTAPATTSTQTTTTTTTEVTSTTVPGNGIT). Positions 127–173 (KFYFVNKGDNCADITARYNLDLSDFLEWNPKAGNSCSGLWANAYACV) constitute a LysM 2 domain. The segment at 183-206 (KPKPTSTSTKPPTATGNGIPTPLP) is disordered. Low complexity predominate over residues 186–195 (PTSTSTKPPT). The region spanning 217-263 (KFYLVKPGETCADIASRNGVSLSDFLQWNPHAGNACSGLWANAYACL) is the LysM 3 domain.

The protein belongs to the secreted LysM effector family.

Might have a role in sequestration of chitin oligosaccharides (breakdown products of fungal cell walls that are released during invasion and act as triggers of host immunity) to dampen host defense. The sequence is that of Secreted LysM effector Blys7 from Beauveria bassiana (strain ARSEF 2860) (White muscardine disease fungus).